The sequence spans 252 residues: Type IV pilus assembly protein PilF (252 aa).

The signal sequence occupies residues 1-17 (MTVRAALVFLLAVGLTG). A lipid anchor (N-palmitoyl cysteine) is attached at cysteine 18. The S-diacylglycerol cysteine moiety is linked to residue cysteine 18. TPR repeat units lie at residues 32–67 (GRDEARDAYIQLGLGYLQRGNTEQAKVPLRKALEID), 84–101 (EMEPKLADEEYRKALASD), 104–133 (NARVLNNYGGFLYEQKRYEEAYQRLLEASQ), 139–171 (ERSRVFENLGLVSLQMKKPAQAKEYFEKSLRLN), 174–203 (QPSVALEMADLLYKEREYVPARQYYDLFAQ), and 208–235 (NARSLLLGIRLAKVFEDRDTAASYGLQL).

Interacts with PilQ; this interaction is essential for assemby of PilQ into secretins.

Its subcellular location is the cell outer membrane. Essential component of the type IV pilus (T4P) that plays a role in surface and host cell adhesion, colonization, biofilm maturation, virulence, and twitching, a form of surface-associated motility facilitated by cycles of extension, adhesion, and retraction of T4P fibers. Plays an essential role in the outer membrane localization and assembly of PilQ into secretins which are dodecamers of PilQ. The sequence is that of Type IV pilus assembly protein PilF (pilF) from Pseudomonas aeruginosa (strain ATCC 15692 / DSM 22644 / CIP 104116 / JCM 14847 / LMG 12228 / 1C / PRS 101 / PAO1).